The primary structure comprises 564 residues: MSRRAYAEMYGPTTGDRIRLADTELLIEVERDHTLYGEEVKFGGGKVIRDGMGQSQLPAADVADTVITNAVILDHWGIVKADIAIKHGRIAAIGKAGNPDIQPGVTIAIGAATEIIAGEGLIVTAGGIDTHIHFISPQQIDEALASGVTTMIGGGTGPATGTNATTCTPGPWHMERMLQAADGWPINLGFLGKGNASRPQPLVEQIEAGAIGLKLHEDWGTTPAAIDNCLTVADDTDTQVAIHTDTLNEAGFVEATVAAFKGRTIHTYHTEGAGGGHAPDILKVCGEANVLPSSTNPTRPYTINTLDEHLDMLMVCHHLDPSIAEDLAFAESRIRRETIAAEDILHDLGALSMLSSDSQAMGRVGEVIIRTWQTAHKMKVQRGALTGDGARNDNFRAKRYVAKYTINPALTHGIAHEVGSIEPGKWADLVLWEPAFFGVKPAMIVKGGMIAVAQMGDPNASIPTPQPVHYREMFATRGGALARTSLTFVSQLALDAGIGARYGLAKRLVPVRGCRTVTKRDMIHNAWQPAIRVDPETYDVVADGALLTCEPAAVLPMAQRYFLF.

The Urease domain occupies 126–564 (GGIDTHIHFI…LPMAQRYFLF (439 aa)). Residues histidine 131, histidine 133, and lysine 214 each coordinate Ni(2+). Position 214 is an N6-carboxylysine (lysine 214). Histidine 216 lines the substrate pocket. Residues histidine 243 and histidine 269 each coordinate Ni(2+). Histidine 317 acts as the Proton donor in catalysis. Aspartate 357 lines the Ni(2+) pocket.

Belongs to the metallo-dependent hydrolases superfamily. Urease alpha subunit family. As to quaternary structure, heterotrimer of UreA (gamma), UreB (beta) and UreC (alpha) subunits. Three heterotrimers associate to form the active enzyme. Requires Ni cation as cofactor. In terms of processing, carboxylation allows a single lysine to coordinate two nickel ions.

It localises to the cytoplasm. The enzyme catalyses urea + 2 H2O + H(+) = hydrogencarbonate + 2 NH4(+). The protein operates within nitrogen metabolism; urea degradation; CO(2) and NH(3) from urea (urease route): step 1/1. This is Urease subunit alpha from Burkholderia pseudomallei (strain 1710b).